A 230-amino-acid chain; its full sequence is Demethylluteothin O-methyltransferase (230 aa).

This sequence belongs to the methyltransferase superfamily.

It carries out the reaction demethylluteothin + S-adenosyl-L-methionine = luteothin + S-adenosyl-L-homocysteine. It participates in antibiotic biosynthesis. It functions in the pathway polyketide biosynthesis. Its function is as follows. Methyltransferase involved in the biosynthesis of the antibiotic aureothin, a nitroaryl polyketide metabolite with antifungal, cytotoxic and insecticidal activities. Catalyzes the methylation of demethylluteothin to luteothin (also called deoxyaureothin). Is specific for its gamma-pyrone substrate, and does not act on the alpha-pyrone isomer. This chain is Demethylluteothin O-methyltransferase, found in Streptomyces thioluteus.